We begin with the raw amino-acid sequence, 156 residues long: Small ribosomal subunit protein uS7 (156 aa).

Belongs to the universal ribosomal protein uS7 family. As to quaternary structure, part of the 30S ribosomal subunit. Contacts proteins S9 and S11.

In terms of biological role, one of the primary rRNA binding proteins, it binds directly to 16S rRNA where it nucleates assembly of the head domain of the 30S subunit. Is located at the subunit interface close to the decoding center, probably blocks exit of the E-site tRNA. The protein is Small ribosomal subunit protein uS7 of Treponema denticola (strain ATCC 35405 / DSM 14222 / CIP 103919 / JCM 8153 / KCTC 15104).